Reading from the N-terminus, the 502-residue chain is Cytochrome P450 83A1 (502 aa).

Residues 1–21 traverse the membrane as a helical segment; it reads MEDIIIGVVALAAVLLFFLYQ. Cys442 provides a ligand contact to heme.

The protein belongs to the cytochrome P450 family. Requires heme as cofactor.

The protein localises to the endoplasmic reticulum membrane. It catalyses the reaction an (E)-omega-(methylsulfanyl)-alkanal oxime + glutathione + reduced [NADPH--hemoprotein reductase] + O2 = an S-[(1E)-1-(hydroxyimino)-omega-(methylsulfanyl)alkyl]-L-glutathione + oxidized [NADPH--hemoprotein reductase] + 2 H2O + H(+). Involved in the metabolism of aliphatic and aromatic oximes. Involved in the biosynthesis of both short-chain and long-chain aliphatic glucosinolates. The protein is Cytochrome P450 83A1 (CYP83A1) of Arabidopsis thaliana (Mouse-ear cress).